We begin with the raw amino-acid sequence, 367 residues long: Tetraacyldisaccharide 4'-kinase (367 aa).

Valine 68–threonine 75 contributes to the ATP binding site.

Belongs to the LpxK family.

It catalyses the reaction a lipid A disaccharide + ATP = a lipid IVA + ADP + H(+). It functions in the pathway glycolipid biosynthesis; lipid IV(A) biosynthesis; lipid IV(A) from (3R)-3-hydroxytetradecanoyl-[acyl-carrier-protein] and UDP-N-acetyl-alpha-D-glucosamine: step 6/6. Its function is as follows. Transfers the gamma-phosphate of ATP to the 4'-position of a tetraacyldisaccharide 1-phosphate intermediate (termed DS-1-P) to form tetraacyldisaccharide 1,4'-bis-phosphate (lipid IVA). The sequence is that of Tetraacyldisaccharide 4'-kinase from Chlamydia abortus (strain DSM 27085 / S26/3) (Chlamydophila abortus).